The chain runs to 135 residues: Galectin-1 (135 aa).

Residue alanine 2 is modified to N-acetylalanine. The Galectin domain occupies 4 to 135 (GLVASNLNLK…DFKIKCVAFE (132 aa)). An N6-acetyllysine mark is found at lysine 13 and lysine 29. Serine 30 carries the post-translational modification Phosphoserine. Residues 45–49 (HFNPR), histidine 53, asparagine 62, and 69–72 (WGAE) each bind a beta-D-galactoside. Residue lysine 108 is modified to N6-acetyllysine; alternate. An N6-succinyllysine; alternate modification is found at lysine 108. Lysine 128 bears the N6-acetyllysine mark.

As to quaternary structure, homodimer. Binds LGALS3BP. Interacts with CD2, CD3, CD4, CD6, CD7, CD43, ALCAM and CD45. Interacts with laminin (via poly-N-acetyllactosamine). Interacts with SUSD2. Interacts with cargo receptor TMED10; the interaction mediates the translocation from the cytoplasm into the ERGIC (endoplasmic reticulum-Golgi intermediate compartment) and thereby secretion.

It is found in the secreted. The protein resides in the extracellular space. It localises to the extracellular matrix. Its subcellular location is the cytoplasm. In terms of biological role, lectin that binds beta-galactoside and a wide array of complex carbohydrates. Plays a role in regulating apoptosis, cell proliferation and cell differentiation. Inhibits CD45 protein phosphatase activity and therefore the dephosphorylation of Lyn kinase. Strong inducer of T-cell apoptosis. The chain is Galectin-1 (LGALS1) from Ovis aries (Sheep).